The chain runs to 231 residues: NADH-ubiquinone oxidoreductase chain 4 (231 aa).

6 consecutive transmembrane segments (helical) span residues P1 to I21, L34 to L54, S61 to I80, W84 to L106, V118 to L138, and L156 to L178.

The protein belongs to the complex I subunit 4 family.

It localises to the mitochondrion membrane. The enzyme catalyses a ubiquinone + NADH + 5 H(+)(in) = a ubiquinol + NAD(+) + 4 H(+)(out). In terms of biological role, core subunit of the mitochondrial membrane respiratory chain NADH dehydrogenase (Complex I) that is believed to belong to the minimal assembly required for catalysis. Complex I functions in the transfer of electrons from NADH to the respiratory chain. The immediate electron acceptor for the enzyme is believed to be ubiquinone. In Azemiops feae (Fea's viper), this protein is NADH-ubiquinone oxidoreductase chain 4 (MT-ND4).